We begin with the raw amino-acid sequence, 128 residues long: Calcitonin gene-related peptide 1 (128 aa).

The first 25 residues, 1-25, serve as a signal peptide directing secretion; sequence MGFLKFSPFLVVSILLLYQACSLQA. Residues 26 to 80 constitute a propeptide that is removed on maturation; that stretch reads VPLRSILESSPGMATLSEEEVRLLAALVQDYMQMKARELEQEEEQEAEGSSVTAQ. A disulfide bond links Cys-84 and Cys-89. Phe-119 carries the phenylalanine amide modification. The propeptide occupies 125-128; that stretch reads DLQA.

The protein belongs to the calcitonin family. Detected in nerve cells of cerebrum, hippocampus and pons/midbrain in newborns, and only in nerve cells of pons/midbrain in adult.

Its subcellular location is the secreted. Functionally, CGRP1/CALCA is a peptide hormone that induces vasodilation mediated by the CALCRL-RAMP1 receptor complex. Dilates a variety of vessels including the coronary, cerebral and systemic vasculature. Its abundance in the CNS also points toward a neurotransmitter or neuromodulator role. It also elevates platelet cAMP. CGRP1 can also bind and activate CALCR-RAMP1 (AMYR1) receptor complex. The polypeptide is Calcitonin gene-related peptide 1 (Mus musculus (Mouse)).